The chain runs to 178 residues: Ribosome maturation factor RimP (178 aa).

This sequence belongs to the RimP family.

Its subcellular location is the cytoplasm. Required for maturation of 30S ribosomal subunits. The sequence is that of Ribosome maturation factor RimP from Streptococcus pyogenes serotype M18 (strain MGAS8232).